Here is a 1602-residue protein sequence, read N- to C-terminus: Mediator of RNA polymerase II transcription subunit 26 (1602 aa).

The TFIIS N-terminal domain occupies 8 to 85; it reads QLTSHLSQAL…KMWREMVGIQ (78 aa). Disordered stretches follow at residues 86 to 108, 238 to 298, 399 to 481, 580 to 617, and 694 to 736; these read QTAN…PSAH, VTDS…AQNE, EDSI…KGVD, FSNK…SLDS, and SDNG…MDTP. Over residues 273–285 the composition is skewed to basic residues; sequence RPKKFKKDKKHKE. The segment covering 401–414 has biased composition (polar residues); the sequence is SITNDSSTSCSRLS. Basic and acidic residues predominate over residues 418–431; it reads VEERRKSDKIDDSI. Positions 467-477 are enriched in basic residues; the sequence is VPKKRGRKKGS. The span at 587-604 shows a compositional bias: polar residues; it reads AGNTDSDTITSEPSQDSN. Over residues 715-728 the composition is skewed to basic and acidic residues; it reads KQEEQLPKLERLSD. Residues 792–820 are a coiled coil; that stretch reads LDVASVNADTVQNQINSHNQEGETSEEQN. Disordered stretches follow at residues 1035 to 1158 and 1372 to 1407; these read FEET…EVEN and NTSA…NESD. The span at 1056 to 1070 shows a compositional bias: low complexity; the sequence is SSSSNSSCSNSSNSS. Over residues 1073 to 1083 the composition is skewed to basic and acidic residues; that stretch reads KTQDSINEKLR. Residues 1101–1112 are compositionally biased toward basic residues; that stretch reads RKRRGKNRKKRN. The segment covering 1124–1143 has biased composition (low complexity); sequence ISLNGTISNLSSSNNSSSSE. Over residues 1144–1158 the composition is skewed to acidic residues; the sequence is SETETGLENENEVEN. A compositionally biased stretch (basic and acidic residues) spans 1378–1388; it reads TVSEDPLKIEE.

Belongs to the Mediator complex subunit 26 family. As to quaternary structure, component of the Mediator complex.

It localises to the nucleus. Functionally, component of the Mediator complex, a coactivator involved in the regulated transcription of nearly all RNA polymerase II-dependent genes. Mediator functions as a bridge to convey information from gene-specific regulatory proteins to the basal RNA polymerase II transcription machinery. Mediator is recruited to promoters by direct interactions with regulatory proteins and serves as a scaffold for the assembly of a functional preinitiation complex with RNA polymerase II and the general transcription factors. This chain is Mediator of RNA polymerase II transcription subunit 26 (MED26), found in Drosophila pseudoobscura pseudoobscura (Fruit fly).